The sequence spans 480 residues: Siroheme synthase (480 aa).

The segment at 1–203 is precorrin-2 dehydrogenase /sirohydrochlorin ferrochelatase; the sequence is MNYFPIFANL…QQTAQAEQEL (203 aa). Residues 22–23 and 43–44 contribute to the NAD(+) site; these read SV and NQ. Position 128 is a phosphoserine (S128). Residues 214–480 form a uroporphyrinogen-III C-methyltransferase region; the sequence is GFVSLVGAGP…GGLNAGQRAA (267 aa). Residue P223 coordinates S-adenosyl-L-methionine. D246 acts as the Proton acceptor in catalysis. K268 (proton donor) is an active-site residue. S-adenosyl-L-methionine-binding positions include 299-301, V304, 329-330, M381, and G410; these read GGD and TA.

It in the N-terminal section; belongs to the precorrin-2 dehydrogenase / sirohydrochlorin ferrochelatase family. This sequence in the C-terminal section; belongs to the precorrin methyltransferase family.

It carries out the reaction uroporphyrinogen III + 2 S-adenosyl-L-methionine = precorrin-2 + 2 S-adenosyl-L-homocysteine + H(+). The catalysed reaction is precorrin-2 + NAD(+) = sirohydrochlorin + NADH + 2 H(+). The enzyme catalyses siroheme + 2 H(+) = sirohydrochlorin + Fe(2+). It functions in the pathway cofactor biosynthesis; adenosylcobalamin biosynthesis; precorrin-2 from uroporphyrinogen III: step 1/1. It participates in cofactor biosynthesis; adenosylcobalamin biosynthesis; sirohydrochlorin from precorrin-2: step 1/1. The protein operates within porphyrin-containing compound metabolism; siroheme biosynthesis; precorrin-2 from uroporphyrinogen III: step 1/1. Its pathway is porphyrin-containing compound metabolism; siroheme biosynthesis; siroheme from sirohydrochlorin: step 1/1. It functions in the pathway porphyrin-containing compound metabolism; siroheme biosynthesis; sirohydrochlorin from precorrin-2: step 1/1. In terms of biological role, multifunctional enzyme that catalyzes the SAM-dependent methylations of uroporphyrinogen III at position C-2 and C-7 to form precorrin-2 via precorrin-1. Then it catalyzes the NAD-dependent ring dehydrogenation of precorrin-2 to yield sirohydrochlorin. Finally, it catalyzes the ferrochelation of sirohydrochlorin to yield siroheme. This is Siroheme synthase from Neisseria meningitidis serogroup C (strain 053442).